A 126-amino-acid chain; its full sequence is Desulfoferrodoxin (126 aa).

Residues C10, C13, C29, C30, H49, H69, H75, C116, and H119 each contribute to the Fe cation site.

It belongs to the desulfoferrodoxin family. In terms of assembly, homodimer. Fe(3+) serves as cofactor. It depends on Cu(2+) as a cofactor.

The enzyme catalyses reduced [rubredoxin] + superoxide + 2 H(+) = oxidized [rubredoxin] + H2O2. Its function is as follows. Catalyzes the one-electron reduction of superoxide anion radical to hydrogen peroxide at a nonheme ferrous iron center. Plays a fundamental role in case of oxidative stress via its superoxide detoxification activity. This is Desulfoferrodoxin (dfx) from Desulfarculus baarsii (strain ATCC 33931 / DSM 2075 / LMG 7858 / VKM B-1802 / 2st14).